The primary structure comprises 318 residues: MKILLANPRGFCAGVSRAVETVEKVLEVEKSPVYVRHEVVHNKVVVDSLKKKGVVFVKEVDEVPDDAVCIFSAHGVSLKVEEAAAKKNLVLYDATCPLVTKVHRGVRLASNNDAECILIGHKGHPEVQGTMGQYRSKKGAIYLIESEEDLNKLTIKDPDNLYYATQTTLSVDETQGIIQALKDKYPNIKGPKKEDICYATQNRQTAIKAMLKHIDVLVVVGSQNSSNSNRLKELATLEGIDAYLVDNPKDVDKLWFDNKKVCGVSAGASAPEYLVQQIISQISKVCSTEVEEFEGIKEEVYFPLPRLLKQKIGTGKVE.

C12 lines the [4Fe-4S] cluster pocket. (2E)-4-hydroxy-3-methylbut-2-enyl diphosphate is bound by residues H41 and H74. Dimethylallyl diphosphate contacts are provided by H41 and H74. Isopentenyl diphosphate contacts are provided by H41 and H74. C96 contacts [4Fe-4S] cluster. H124 is a binding site for (2E)-4-hydroxy-3-methylbut-2-enyl diphosphate. H124 contributes to the dimethylallyl diphosphate binding site. Position 124 (H124) interacts with isopentenyl diphosphate. Residue E126 is the Proton donor of the active site. Position 167 (T167) interacts with (2E)-4-hydroxy-3-methylbut-2-enyl diphosphate. C197 contributes to the [4Fe-4S] cluster binding site. Residues S225, S226, N227, and S269 each coordinate (2E)-4-hydroxy-3-methylbut-2-enyl diphosphate. Residues S225, S226, N227, and S269 each coordinate dimethylallyl diphosphate. Residues S225, S226, N227, and S269 each contribute to the isopentenyl diphosphate site.

The protein belongs to the IspH family. [4Fe-4S] cluster is required as a cofactor.

It carries out the reaction isopentenyl diphosphate + 2 oxidized [2Fe-2S]-[ferredoxin] + H2O = (2E)-4-hydroxy-3-methylbut-2-enyl diphosphate + 2 reduced [2Fe-2S]-[ferredoxin] + 2 H(+). The catalysed reaction is dimethylallyl diphosphate + 2 oxidized [2Fe-2S]-[ferredoxin] + H2O = (2E)-4-hydroxy-3-methylbut-2-enyl diphosphate + 2 reduced [2Fe-2S]-[ferredoxin] + 2 H(+). The protein operates within isoprenoid biosynthesis; dimethylallyl diphosphate biosynthesis; dimethylallyl diphosphate from (2E)-4-hydroxy-3-methylbutenyl diphosphate: step 1/1. Its pathway is isoprenoid biosynthesis; isopentenyl diphosphate biosynthesis via DXP pathway; isopentenyl diphosphate from 1-deoxy-D-xylulose 5-phosphate: step 6/6. In terms of biological role, catalyzes the conversion of 1-hydroxy-2-methyl-2-(E)-butenyl 4-diphosphate (HMBPP) into a mixture of isopentenyl diphosphate (IPP) and dimethylallyl diphosphate (DMAPP). Acts in the terminal step of the DOXP/MEP pathway for isoprenoid precursor biosynthesis. The protein is 4-hydroxy-3-methylbut-2-enyl diphosphate reductase of Francisella tularensis subsp. mediasiatica (strain FSC147).